Here is a 262-residue protein sequence, read N- to C-terminus: Ribosomal RNA small subunit methyltransferase A (262 aa).

S-adenosyl-L-methionine is bound by residues H11, I13, G38, E60, D85, and N105.

The protein belongs to the class I-like SAM-binding methyltransferase superfamily. rRNA adenine N(6)-methyltransferase family. RsmA subfamily.

The protein localises to the cytoplasm. The enzyme catalyses adenosine(1518)/adenosine(1519) in 16S rRNA + 4 S-adenosyl-L-methionine = N(6)-dimethyladenosine(1518)/N(6)-dimethyladenosine(1519) in 16S rRNA + 4 S-adenosyl-L-homocysteine + 4 H(+). Functionally, specifically dimethylates two adjacent adenosines (A1518 and A1519) in the loop of a conserved hairpin near the 3'-end of 16S rRNA in the 30S particle. May play a critical role in biogenesis of 30S subunits. In Neorickettsia sennetsu (strain ATCC VR-367 / Miyayama) (Ehrlichia sennetsu), this protein is Ribosomal RNA small subunit methyltransferase A.